The chain runs to 742 residues: Two-component response regulator-like PRR37 (742 aa).

The Response regulatory domain maps to 63-181; sequence KVLLVDSDDS…ELKNLWQHVW (119 aa). Residues 186 to 195 show a composition bias toward low complexity; it reads SSSGSGSESG. 6 disordered regions span residues 186–249, 290–346, 375–402, 478–570, 590–671, and 697–742; these read SSSG…SWTK, PCTS…PLQN, DAQQ…NRDN, MKSN…VQSN, NGGS…GNDM, and NFGK…AADR. The span at 236–248 shows a compositional bias: polar residues; it reads DNGSGTQAQSSWT. Residues 299–313 are compositionally biased toward basic and acidic residues; that stretch reads KQKETNDDFKGKDLE. The segment covering 318 to 330 has biased composition (polar residues); that stretch reads RNLNTAYQSSPNE. Over residues 331-341 the composition is skewed to basic and acidic residues; sequence RSIKPTDRRNE. Residues 380-390 show a composition bias toward polar residues; that stretch reads ARATNAPNCSS. Over residues 490 to 502 the composition is skewed to low complexity; the sequence is GSNGSSNNNDMGS. Residues 503 to 512 are compositionally biased toward polar residues; it reads TTKNVVTKPS. Low complexity predominate over residues 618 to 634; that stretch reads NGSNSGSNNGSNGQNGS. The segment covering 656-667 has biased composition (gly residues); it reads GPGGGNGSGSGS. In terms of domain architecture, CCT spans 682 to 724; that stretch reads RVAAVIKFRQKRKERNFGKKVRYQSRKRLAEQRPRVRGQFVRQ. A compositionally biased stretch (basic residues) spans 697-708; it reads NFGKKVRYQSRK. Positions 719–731 are enriched in low complexity; sequence GQFVRQAVQDQQQ.

The protein belongs to the ARR-like family.

The protein resides in the nucleus. Its function is as follows. Controls photoperiodic flowering response. Seems to be one of the component of the circadian clock. Expression of several members of the ARR-like family is controlled by circadian rhythm. The particular coordinated sequential expression of PRR73, PRR37, PRR95, PRR59 and PPR1 result to circadian waves that may be at the basis of the endogenous circadian clock. This chain is Two-component response regulator-like PRR37 (PRR37), found in Oryza sativa subsp. indica (Rice).